Here is a 342-residue protein sequence, read N- to C-terminus: L-threonine 3-dehydrogenase (342 aa).

Cys38 lines the Zn(2+) pocket. Residues Thr40 and His43 each act as charge relay system in the active site. Zn(2+) is bound by residues His63, Glu64, Cys93, Cys96, Cys99, and Cys107. NAD(+) contacts are provided by residues Ile175, Asp195, Arg200, 262–264 (LGI), and 286–287 (IY).

Belongs to the zinc-containing alcohol dehydrogenase family. Homotetramer. Zn(2+) is required as a cofactor.

It is found in the cytoplasm. The catalysed reaction is L-threonine + NAD(+) = (2S)-2-amino-3-oxobutanoate + NADH + H(+). It participates in amino-acid degradation; L-threonine degradation via oxydo-reductase pathway; glycine from L-threonine: step 1/2. Its function is as follows. Catalyzes the NAD(+)-dependent oxidation of L-threonine to 2-amino-3-ketobutyrate. This chain is L-threonine 3-dehydrogenase, found in Burkholderia multivorans (strain ATCC 17616 / 249).